Reading from the N-terminus, the 307-residue chain is MATRIPFDESYWEEYLSGQEASLPALPAVTQLSPRVTRLLAGNPGIMQLQGTNTYLVGTGPARILIDTGEGRPVWHATLAEHLRTHHLTLEYILLTHWHGDHTGGIPDLIAHDPTLQSRIYKHHPDRGQRPIRDGQRFTVTGATVRAVFTPGHAIDHMCFLIEEEKALLTGDNVLGHGFAIVQDLAEYMASLARMAALGCERGYPAHGAVIENLPAKMQLYIHHNEVRVQQVITALASVVKLPGKRVGMTVPEIGRAIYGEVPREIVENAIVPFLSQVLWKLAEDRKVGFEPGEANKRRWFGLVTQQ.

4 residues coordinate Zn(2+): His97, His99, Asp101, and His102. Asp101 acts as the Proton donor/acceptor in catalysis.

It belongs to the metallo-beta-lactamase superfamily. Zn(2+) serves as cofactor.

The protein operates within secondary metabolite biosynthesis; terpenoid biosynthesis. Functionally, lactamase-like protein; part of the gene cluster that mediates the biosynthesis of viridicatumtoxin, a tetracycline-like fungal meroterpenoid with a unique, fused spirobicyclic ring system. The first step of the pathway is the production of the malonamoyl-CoA starter unit for the polyketide synthase vrtA. The aldolase vrtJ may be involved in the synthesis of the malonamate substrate for malonamoyl-CoA synthetase vrtB. The polyketide synthase vrtA then may utilize the malonamoyl-CoA starter unit, followed by sequential condensation of eight malonyl-CoA units to form the polyketide backbone. The cyclization of the last ring could be mediated by the lactamase-like protein vrtG. The proposed post-PKS tailoring steps are a hydroxylation at C5 catalyzed the cytochrome P450 monooxygenase vrtE, a hydroxylation at C12a catalyzed by VrtH and/or VrtI, and an O-methylation by the O-methyltransferase vrtF. VrtC is then proposed to catalyze the transfer of a geranyl group synthesized by vrtD to the aromatic C ring of the tetracyclic polyketide intermediate of viridicatumtoxin to yield previridicatumtoxin. Finally, the cytochrome P450 monooxygenase vrtK catalyzes the spirocyclization of the geranyl moiety of previridicatumtoxin to afford viridicatumtoxin. This Penicillium aethiopicum protein is Lactamase-like protein vrtG.